Reading from the N-terminus, the 399-residue chain is MLKEAISEIQRGCAEIIDEPRVEKLLKAYFEKGETYTVKAGFDPTAPDLHLGHTVLLQKLAIFQKYGARVQFLIGDFTAQIGDPSGKSATRKILSTEDILENAKSYKEQVFKILDASKTDVVFNSEWLNALGASGMITLTTTFNVARMLERDDFDKRYKSGTSIAISEFLYPLLQGYDSVHLKSDIEVGGTDQKFNLLMGRHLQRSYDVGKEQAVLMVPILEGLDGVQKMSKSLGNYIGVSENPNEIFGKVLSISDELMWRYYELLSTKTLAEIERLKSGVEAGTLHPKKVKEELAIEITARFHSSESAQNAKDEFDRVHSNNQIPTEMDEFSSSEAISITKALVDCNLTPSTSQARRDIKQGAVRINQEKIDDETLSLESGEYILQVGKRKFAKLKVN.

A 'HIGH' region motif is present at residues 44 to 53 (PTAPDLHLGH). A 'KMSKS' region motif is present at residues 229 to 233 (KMSKS). Residue Lys232 participates in ATP binding. The 61-residue stretch at 338–398 (ISITKALVDC…GKRKFAKLKV (61 aa)) folds into the S4 RNA-binding domain.

This sequence belongs to the class-I aminoacyl-tRNA synthetase family. TyrS type 2 subfamily. As to quaternary structure, homodimer.

It localises to the cytoplasm. It catalyses the reaction tRNA(Tyr) + L-tyrosine + ATP = L-tyrosyl-tRNA(Tyr) + AMP + diphosphate + H(+). Functionally, catalyzes the attachment of tyrosine to tRNA(Tyr) in a two-step reaction: tyrosine is first activated by ATP to form Tyr-AMP and then transferred to the acceptor end of tRNA(Tyr). The chain is Tyrosine--tRNA ligase from Sulfurimonas denitrificans (strain ATCC 33889 / DSM 1251) (Thiomicrospira denitrificans (strain ATCC 33889 / DSM 1251)).